We begin with the raw amino-acid sequence, 300 residues long: Ribosomal protein bS6--L-glutamate ligase (300 aa).

One can recognise an ATP-grasp domain in the interval 104–287; sequence MQLLARQGID…IAGKMIRWIE (184 aa). ATP contacts are provided by residues lysine 141, 178 to 179, aspartate 187, and 211 to 213; these read EY and RSN. Mg(2+) is bound by residues aspartate 248, glutamate 260, and asparagine 262. Aspartate 248, glutamate 260, and asparagine 262 together coordinate Mn(2+).

It belongs to the RimK family. Requires Mg(2+) as cofactor. Mn(2+) serves as cofactor.

Functionally, an L-glutamate ligase that catalyzes the ATP-dependent post-translational addition of glutamate residues to the C-terminus of ribosomal protein bS6 (RpsF). Is also able to catalyze the synthesis of poly-alpha-glutamate in vitro, via ATP hydrolysis from unprotected glutamate as substrate. The number of glutamate residues added to either RpsF or to poly-alpha-glutamate changes with pH. This is Ribosomal protein bS6--L-glutamate ligase from Escherichia fergusonii (strain ATCC 35469 / DSM 13698 / CCUG 18766 / IAM 14443 / JCM 21226 / LMG 7866 / NBRC 102419 / NCTC 12128 / CDC 0568-73).